The primary structure comprises 268 residues: Aliphatic sulfonates import ATP-binding protein SsuB 3 (268 aa).

The interval 1–27 (MTAAEAPLPPLAPRERTATTAAERRTG) is disordered. The span at 13 to 26 (PRERTATTAAERRT) shows a compositional bias: basic and acidic residues. In terms of domain architecture, ABC transporter spans 32-247 (VSLSGVRKSF…DRNDPEALRY (216 aa)). Residue 64 to 71 (GPSGTGKT) coordinates ATP.

Belongs to the ABC transporter superfamily. Aliphatic sulfonates importer (TC 3.A.1.17.2) family. The complex is composed of two ATP-binding proteins (SsuB), two transmembrane proteins (SsuC) and a solute-binding protein (SsuA).

Its subcellular location is the cell membrane. The enzyme catalyses ATP + H2O + aliphatic sulfonate-[sulfonate-binding protein]Side 1 = ADP + phosphate + aliphatic sulfonateSide 2 + [sulfonate-binding protein]Side 1.. In terms of biological role, part of the ABC transporter complex SsuABC involved in aliphatic sulfonates import. Responsible for energy coupling to the transport system. In Rhodococcus jostii (strain RHA1), this protein is Aliphatic sulfonates import ATP-binding protein SsuB 3.